We begin with the raw amino-acid sequence, 910 residues long: UPF0182 protein Acid_6445 (910 aa).

A run of 7 helical transmembrane segments spans residues 17–37 (ITLLAILLFLLFGLRSFAGYA), 56–76 (LYYGIAPVAVATLVAFLALWI), 101–121 (LALLFLAWFIAAGAIDTWTVV), 157–177 (LLRSYVLAVIIFCVLLYWIAA), 210–229 (FLRGAAVIGLIALAVRFYLG), 252–272 (IGLPLQWLVIFACLAAAAFVA), and 276–296 (WFLAALMALALVVDFAAPRIV).

It belongs to the UPF0182 family.

It localises to the cell membrane. The polypeptide is UPF0182 protein Acid_6445 (Solibacter usitatus (strain Ellin6076)).